The following is a 276-amino-acid chain: Potassium/proton antiporter CemA (276 aa).

3 helical membrane passes run 59 to 79, 199 to 219, and 236 to 256; these read LLLLILIPVLVNQMSKSWIFG, FFIILFTDMFIGFHSPHGWEV, and FIFLFIATFPVALDTVFKYWI.

This sequence belongs to the CemA family.

It is found in the plastid. It localises to the chloroplast inner membrane. The catalysed reaction is K(+)(in) + H(+)(out) = K(+)(out) + H(+)(in). Functionally, contributes to K(+)/H(+) antiport activity by supporting proton efflux to control proton extrusion and homeostasis in chloroplasts in a light-dependent manner to modulate photosynthesis. Prevents excessive induction of non-photochemical quenching (NPQ) under continuous-light conditions. Indirectly promotes efficient inorganic carbon uptake into chloroplasts. This chain is Potassium/proton antiporter CemA, found in Cyanidioschyzon merolae (strain NIES-3377 / 10D) (Unicellular red alga).